We begin with the raw amino-acid sequence, 2151 residues long: Calpain-type cysteine protease DEK1 (2151 aa).

The N-terminal stretch at 1–32 is a signal peptide; that stretch reads MEGDERGVLLACVISGTLFTVFGSGSFWILWA. Residues 33 to 69 lie on the Extracellular side of the membrane; it reads VNWRPWRLYSWIFARKWPKVLQGPQLDILCGVLSLFA. Residues 70–90 traverse the membrane as a helical segment; that stretch reads WIVVVSPIAILIGWGSWLIVI. The Cytoplasmic portion of the chain corresponds to 91 to 94; it reads LDRH. A helical transmembrane segment spans residues 95–115; sequence IIGLAIIMAGTALLLAFYSIM. Residues 116–126 are Extracellular-facing; sequence LWWRTQWQSSR. Residues 127 to 147 traverse the membrane as a helical segment; the sequence is AVALLLLLGVALLCAYELCAV. Residues 148–163 are Cytoplasmic-facing; sequence YVTAGAHASQQYSPSG. The helical transmembrane segment at 164–184 threads the bilayer; that stretch reads FFFGVSAIALAINMLFICRMV. Over 185 to 235 the chain is Extracellular; it reads FNGNGLDVDEYVRRAYKFAYSDCIEVGPVACLPEPPDPNELYPRQTSRASH. A helical membrane pass occupies residues 236-256; that stretch reads LGLLYLGSLVVLLAYSVLYGL. Topologically, residues 257–263 are cytoplasmic; that stretch reads TARESRW. A helical membrane pass occupies residues 264–284; sequence LGGITSAAVIVLDWNIGACLY. At 285-293 the chain is on the extracellular side; sequence GFKLLQNRV. Residues 294-314 traverse the membrane as a helical segment; that stretch reads LALFVAGISRLFLICFGIHYW. At 315-319 the chain is on the cytoplasmic side; the sequence is YLGHC. The helical transmembrane segment at 320 to 340 threads the bilayer; sequence ISYIFVASVLSGAAVSRHLSI. Over 341–615 the chain is Extracellular; that stretch reads TDPSAARRDA…LLLHHVAGTP (275 aa). 2 disordered regions span residues 363–393 and 405–442; these read RRKE…GHTG and CTAD…SCRS. Positions 369 to 388 are enriched in low complexity; the sequence is SSSSSSDGCGSSIKRSSSID. Over residues 405–420 the composition is skewed to polar residues; that stretch reads CTADNLTRTGSSQEGI. A compositionally biased stretch (low complexity) spans 430–442; it reads RPSLGLRSSSCRS. The helical transmembrane segment at 616 to 636 threads the bilayer; sequence ERAWGLFSLVFILETIIVAIF. The Cytoplasmic portion of the chain corresponds to 637–652; sequence RPKTITIINSSHQQFE. Residues 653–673 traverse the membrane as a helical segment; the sequence is FGFSVLLLSPVVCSIMAFLRS. At 674-686 the chain is on the extracellular side; that stretch reads LQVEEMALTSKSR. A helical transmembrane segment spans residues 687-707; it reads KYGFVAWLLSTSVGLSLSFLS. Topologically, residues 708 to 711 are cytoplasmic; that stretch reads KSSV. Residues 712–732 traverse the membrane as a helical segment; that stretch reads LLGISLTVPLMAACLSIAVPI. Topologically, residues 733-760 are extracellular; that stretch reads WMHNGYQFWVPQLSCGDQARDLRSPRIK. A helical transmembrane segment spans residues 761-782; it reads GFILWICVVLFAGSVISLGAII. Residues 783 to 813 are Cytoplasmic-facing; sequence SAKPLDDLKYKLFSARENNVTSPYTSSVYLG. A helical membrane pass occupies residues 814-834; the sequence is WAMSSGIALVVTAILPIVSWF. Residues 835–844 are Extracellular-facing; that stretch reads ATYRFSHSSA. Residues 845–865 traverse the membrane as a helical segment; it reads VCLMIFSVVLVAFCGTSYLEV. Topologically, residues 866 to 878 are cytoplasmic; it reads VKSRDDQLPTKGD. A helical membrane pass occupies residues 879–899; the sequence is FLAALLPLACIPALLSLCCGM. Residues 900-912 lie on the Extracellular side of the membrane; the sequence is VKWKDDCWILSRG. A helical transmembrane segment spans residues 913-933; it reads VYVFFSIGLLLLFGAIAAVIA. The Cytoplasmic portion of the chain corresponds to 934 to 936; the sequence is VKP. A helical transmembrane segment spans residues 937–957; sequence WTIGVSFLLVLFLMVVTIGVI. Residues 958-971 lie on the Extracellular side of the membrane; the sequence is HLWASNNFYLTRKQ. Residues 972 to 992 traverse the membrane as a helical segment; the sequence is TSFVCFLALLLGLAAFLLGWH. Topologically, residues 993–1006 are cytoplasmic; that stretch reads QDKAFAGASVGYFT. Residues 1007-1027 traverse the membrane as a helical segment; sequence FLSLLAGRALAVLLSPPIVVY. Residues 1028-1050 are Extracellular-facing; it reads SPRVLPVYVYDAHADCGKNVSAA. A helical membrane pass occupies residues 1051-1071; it reads FLVLYGIALATEGWGVVASLI. Over 1072 to 2151 the chain is Cytoplasmic; sequence IYPPFAGAAV…TKASIVLEAL (1080 aa). 2 consecutive Calpain catalytic domains span residues 1407–1600 and 1695–1997; these read SGKH…DMID and QFTD…CRVY. Active-site residues include Cys1761, His1919, and Asn1939.

Belongs to the peptidase C2 family. Post-translationally, autocatalytic proteolytic cleavage leading to the production of mainly cytoplasmic localized subproducts of about 85 and 120 kDa. In terms of tissue distribution, mostly expressed in meristems and organ primordia. Expressed at low levels in young and germinating seeds at 10 ppm and in seedling roots at 67 ppm. Present in most tissues at a low level.

Its subcellular location is the cell membrane. The protein localises to the endosome membrane. It localises to the endoplasmic reticulum membrane. The protein resides in the cytoplasm. Functionally, essential protease involved in epiderm development. Required for aleurone cell development in the endosperm probably by maintaining and restricting the aleurone and embryonic epidermal L1 cell-layer fates as well as meristems organization. Involved in the maintenance of adaxial/abaxial axis information in developing leaves, probably by regulating cell proliferation and expansion. Does not need calcium ions to be active. Required for the formation of giant cells in sepals by determining cell fate and promoting endoreplication. This chain is Calpain-type cysteine protease DEK1, found in Arabidopsis thaliana (Mouse-ear cress).